A 298-amino-acid chain; its full sequence is Ribonuclease HII (298 aa).

Residues 1–57 are disordered; it reads MIREPQKSAKAASKSSAPRARSSVAKATSTKATSSKAASSKAAPSKAGADAGAAKPR. A compositionally biased stretch (low complexity) spans 8 to 55; that stretch reads SAKAASKSSAPRARSSVAKATSTKATSSKAASSKAAPSKAGADAGAAK. The RNase H type-2 domain maps to 85–273; sequence WPVAGCDEAG…VAAAWRKIEG (189 aa). Positions 91, 92, and 182 each coordinate a divalent metal cation.

This sequence belongs to the RNase HII family. Mn(2+) is required as a cofactor. The cofactor is Mg(2+).

It localises to the cytoplasm. It catalyses the reaction Endonucleolytic cleavage to 5'-phosphomonoester.. Functionally, endonuclease that specifically degrades the RNA of RNA-DNA hybrids. The protein is Ribonuclease HII of Rhodopseudomonas palustris (strain BisB5).